The chain runs to 147 residues: Hemoglobin subunit beta (147 aa).

Residues 2–147 (EWTDAERSAI…VVSALCRQYH (146 aa)) enclose the Globin domain. Positions 63 and 92 each coordinate heme b.

The protein belongs to the globin family. Heterotetramer of two alpha chains and two beta chains. As to expression, red blood cells.

Its function is as follows. Involved in oxygen transport from gills to the various peripheral tissues. In Carassius auratus (Goldfish), this protein is Hemoglobin subunit beta (hbb).